The sequence spans 395 residues: Phosphoglycerate kinase (395 aa).

Substrate contacts are provided by residues 22–24 (DFN), Arg-38, 61–64 (HLGR), Arg-119, and Arg-152. ATP is bound by residues Lys-203, Gly-294, Glu-325, and 351-354 (GGDT).

Belongs to the phosphoglycerate kinase family. In terms of assembly, monomer.

The protein localises to the cytoplasm. The catalysed reaction is (2R)-3-phosphoglycerate + ATP = (2R)-3-phospho-glyceroyl phosphate + ADP. The protein operates within carbohydrate degradation; glycolysis; pyruvate from D-glyceraldehyde 3-phosphate: step 2/5. The sequence is that of Phosphoglycerate kinase from Hydrogenobaculum sp. (strain Y04AAS1).